Here is a 1431-residue protein sequence, read N- to C-terminus: Zinc finger protein 687b (1431 aa).

Disordered stretches follow at residues 24 to 481 and 504 to 538; these read KEAI…RPLK and KGGA…TTAG. The span at 61–73 shows a compositional bias: low complexity; sequence SPSPSTDSQSDPS. Residues 103 to 122 show a composition bias toward polar residues; the sequence is GFVSSGGSVHMSQSRGQPNG. Composition is skewed to low complexity over residues 174-188, 196-209, and 217-248; these read MQLL…EMNL, APAN…AASP, and LLST…ASSP. A compositionally biased stretch (polar residues) spans 249–267; sequence LATSLTEPFNGTPRLSSSA. The segment covering 311-324 has biased composition (low complexity); it reads SQSPSIPPSTSISP. Residues 342–359 show a composition bias toward polar residues; that stretch reads RAQQNWLSTAAQTGNGKS. A compositionally biased stretch (basic and acidic residues) spans 361–377; the sequence is PQEERNPEHVIEERDSP. Residues 385 to 410 show a composition bias toward low complexity; sequence PKSSMPTSAVTKRSCSPAAASSPSAA. Residues 438-449 are compositionally biased toward basic and acidic residues; the sequence is DGGKGDTDKIEV. Over residues 519–528 the composition is skewed to gly residues; that stretch reads QTGGRAGPVK. The segment at 674-692 adopts a C2H2-type 1; degenerate zinc-finger fold; sequence YRCLECGDSFALERSLARH. The interval 754 to 816 is disordered; it reads TTPIGMLSPS…GPQSPQALMP (63 aa). Residues 760–775 show a composition bias toward low complexity; it reads LSPSLSSPPLTSSTTP. The span at 781 to 802 shows a compositional bias: polar residues; sequence APSTSSPLKDSPSPGTASTQPS. A C2H2-type 2; degenerate zinc finger spans residues 830–853; sequence FKCPECQAQFLSKAELVTHFQQIR. C2H2-type zinc fingers lie at residues 919-942, 947-970, 982-1004, and 1013-1036; these read YRCS…QTAH, HKCP…TSQH, YKCV…FDTH, and FKCP…KTAH. The disordered stretch occupies residues 1041-1120; the sequence is VKAETPPTTS…QVSSPESGNM (80 aa). Low complexity predominate over residues 1043-1057; it reads AETPPTTSSPVSAPA. Residues 1058-1075 show a composition bias toward polar residues; it reads GNSTSKPKPATENNSDEL. Acidic residues predominate over residues 1080–1111; it reads GEEEEEGEDEEGEQEGEEREDEEEEENEEEEQ. Residues 1122–1145 form a C2H2-type 7 zinc finger; the sequence is WRCKECKKRFPEREDYIDHMKNEH. A C2H2-type 8; degenerate zinc finger spans residues 1205–1227; the sequence is WHCSEGKRTFSSRLILEKHIRVR. The interval 1225-1310 is disordered; the sequence is RVRHGIRSRQ…EEEDGTFRCT (86 aa). 2 C2H2-type zinc fingers span residues 1307–1329 and 1337–1360; these read FRCT…IPVH and QQCL…FITH. Residues 1362 to 1392 form a disordered region; the sequence is LRQGQHDRNASPGASPQYGSPSSPKAGEDGD. The segment covering 1373-1384 has biased composition (polar residues); that stretch reads PGASPQYGSPSS. The C2H2-type 11 zinc finger occupies 1395–1425; it reads VSCRVCGRRFDKASDLNTHFRTHGMAFITAH.

It belongs to the krueppel C2H2-type zinc-finger protein family. As to expression, widely expressed with highest levels in eye, spleen and ovary.

It localises to the nucleus. Its function is as follows. May be involved in transcriptional regulation. The polypeptide is Zinc finger protein 687b (znf687b) (Danio rerio (Zebrafish)).